A 90-amino-acid chain; its full sequence is Cell division topological specificity factor (90 aa).

Belongs to the MinE family.

Functionally, prevents the cell division inhibition by proteins MinC and MinD at internal division sites while permitting inhibition at polar sites. This ensures cell division at the proper site by restricting the formation of a division septum at the midpoint of the long axis of the cell. The protein is Cell division topological specificity factor of Clostridium perfringens (strain ATCC 13124 / DSM 756 / JCM 1290 / NCIMB 6125 / NCTC 8237 / Type A).